The sequence spans 123 residues: Fluoride-specific ion channel FluC 1 (123 aa).

Transmembrane regions (helical) follow at residues 1–21, 34–54, 59–79, and 99–119; these read MVDLLLIGLGGSIGAILRYTL, PLATFLINIIGSFGLGLLYGF, VIWLLLGTGFFGGFTTFSTYI, and LTSIFTGVVFFAAGMWLANFF. 2 residues coordinate Na(+): Gly-70 and Thr-73.

It belongs to the fluoride channel Fluc/FEX (TC 1.A.43) family.

It is found in the cell membrane. It carries out the reaction fluoride(in) = fluoride(out). With respect to regulation, na(+) is not transported, but it plays an essential structural role and its presence is essential for fluoride channel function. Fluoride-specific ion channel. Important for reducing fluoride concentration in the cell, thus reducing its toxicity. This chain is Fluoride-specific ion channel FluC 1, found in Carboxydothermus hydrogenoformans (strain ATCC BAA-161 / DSM 6008 / Z-2901).